Consider the following 319-residue polypeptide: Aspartate carbamoyltransferase catalytic subunit (319 aa).

R55 and T56 together coordinate carbamoyl phosphate. L-aspartate is bound at residue K83. Carbamoyl phosphate contacts are provided by R105, H144, and Q147. The L-aspartate site is built by R177 and R231. Positions 272 and 273 each coordinate carbamoyl phosphate.

Belongs to the aspartate/ornithine carbamoyltransferase superfamily. ATCase family. As to quaternary structure, heterododecamer (2C3:3R2) of six catalytic PyrB chains organized as two trimers (C3), and six regulatory PyrI chains organized as three dimers (R2).

The enzyme catalyses carbamoyl phosphate + L-aspartate = N-carbamoyl-L-aspartate + phosphate + H(+). Its pathway is pyrimidine metabolism; UMP biosynthesis via de novo pathway; (S)-dihydroorotate from bicarbonate: step 2/3. Its function is as follows. Catalyzes the condensation of carbamoyl phosphate and aspartate to form carbamoyl aspartate and inorganic phosphate, the committed step in the de novo pyrimidine nucleotide biosynthesis pathway. The protein is Aspartate carbamoyltransferase catalytic subunit of Nocardia farcinica (strain IFM 10152).